The chain runs to 256 residues: Small ribosomal subunit protein eS1 (256 aa).

At alanine 2 the chain carries N-acetylalanine; partial.

It belongs to the eukaryotic ribosomal protein eS1 family. In terms of assembly, component of the small ribosomal subunit. Mature ribosomes consist of a small (40S) and a large (60S) subunit. The 40S subunit contains about 33 different proteins and 1 molecule of RNA (18S). The 60S subunit contains about 49 different proteins and 3 molecules of RNA (25S, 5.8S and 5S).

Its subcellular location is the cytoplasm. The chain is Small ribosomal subunit protein eS1 from Komagataella phaffii (strain GS115 / ATCC 20864) (Yeast).